Reading from the N-terminus, the 21-residue chain is Fibrinogen beta chain (21 aa).

Residues 1 to 11 are compositionally biased toward acidic residues; that stretch reads EFPTDYDEGED. The disordered stretch occupies residues 1 to 21; the sequence is EFPTDYDEGEDDRPKVGLGAR. Tyr-6 is modified (sulfotyrosine).

Heterohexamer; disulfide linked. Contains 2 sets of 3 non-identical chains (alpha, beta and gamma). The 2 heterotrimers are in head to head conformation with the N-termini in a small central domain. Post-translationally, conversion of fibrinogen to fibrin is triggered by thrombin, which cleaves fibrinopeptides A and B from alpha and beta chains, and thus exposes the N-terminal polymerization sites responsible for the formation of the soft clot.

Its subcellular location is the secreted. Cleaved by the protease thrombin to yield monomers which, together with fibrinogen alpha (FGA) and fibrinogen gamma (FGG), polymerize to form an insoluble fibrin matrix. Fibrin has a major function in hemostasis as one of the primary components of blood clots. In addition, functions during the early stages of wound repair to stabilize the lesion and guide cell migration during re-epithelialization. Was originally thought to be essential for platelet aggregation, based on in vitro studies using anticoagulated blood. However subsequent studies have shown that it is not absolutely required for thrombus formation in vivo. Enhances expression of SELP in activated platelets. Maternal fibrinogen is essential for successful pregnancy. Fibrin deposition is also associated with infection, where it protects against IFNG-mediated hemorrhage. May also facilitate the antibacterial immune response via both innate and T-cell mediated pathways. The chain is Fibrinogen beta chain (FGB) from Bison bonasus (European bison).